The sequence spans 512 residues: MGLPWYRVHTVVLNDPGRLIAVHLMHTALVSGWAGSMALYELAVFDPSDPILDPMWRQGMFVIPFMTRLGITKSWGGWSITGETVNNAGIWSYEGVAAVHIVLSGLLFLAAIWHWVYWDLELFRDERTGKPSLDLPKIFGIHLFLSGVLCFAFGAFHVTGLFGPGIWVSDPYGLTGKVQPVVPAWGAEGFDPFVPGGIASHHIAAGILGILAGLFHLSVRPPQRLYKGLRMGNVETVLSSSIAAVFFAAFVVAGTMWYGSAATPVELFGPTRYQWDQGFFQQEIDRRIRASKSENLSLSEAWSKIPEKLAFYDYIGNNPAKGGLFRAGAMDNGDGIAVGWLGHAVFKDREGHELFVRRMPTFFETFPVVLVDEEGIVRADVPFRRAESKYSVEQVGVTVEFYGGELNGVSFSDPATVKKYARRAQLGEIFEFDRATLKSDGVFRSSPRGWFTFGHATFALLFFFGHIWHGARTLFRDVFAGIDPDLDAQVEFGAFQKLGDPTTKRQIITRLI.

The next 6 helical transmembrane spans lie at 21–36, 101–115, 140–156, 203–218, 237–252, and 457–472; these read AVHLMHTALVSGWAGS, IVLSGLLFLAAIWHW, GIHLFLSGVLCFAFGAF, IAAGILGILAGLFHLS, VLSSSIAAVFFAAFVV, and TFALLFFFGHIWHGAR.

Belongs to the PsbB/PsbC family. PsbB subfamily. As to quaternary structure, PSII is composed of 1 copy each of membrane proteins PsbA, PsbB, PsbC, PsbD, PsbE, PsbF, PsbH, PsbI, PsbJ, PsbK, PsbL, PsbM, PsbT, PsbX, PsbY, PsbZ, Psb30/Ycf12, at least 3 peripheral proteins of the oxygen-evolving complex and a large number of cofactors. It forms dimeric complexes. Requires Binds multiple chlorophylls. PSII binds additional chlorophylls, carotenoids and specific lipids. as cofactor.

The protein localises to the plastid. It is found in the chloroplast thylakoid membrane. In terms of biological role, one of the components of the core complex of photosystem II (PSII). It binds chlorophyll and helps catalyze the primary light-induced photochemical processes of PSII. PSII is a light-driven water:plastoquinone oxidoreductase, using light energy to abstract electrons from H(2)O, generating O(2) and a proton gradient subsequently used for ATP formation. This Physcomitrium patens (Spreading-leaved earth moss) protein is Photosystem II CP47 reaction center protein.